The sequence spans 349 residues: Hydroxymethylglutaryl-CoA synthase (349 aa).

2 residues coordinate (3S)-3-hydroxy-3-methylglutaryl-CoA: aspartate 29 and alanine 30. Glutamate 81 serves as the catalytic Proton donor/acceptor. (3S)-3-hydroxy-3-methylglutaryl-CoA-binding residues include cysteine 113 and threonine 154. The Acyl-thioester intermediate role is filled by cysteine 113. Position 202 (arginine 202) interacts with CoA. 2 residues coordinate (3S)-3-hydroxy-3-methylglutaryl-CoA: threonine 204 and histidine 237. The active-site Proton donor/acceptor is the histidine 237. Lysine 242 provides a ligand contact to CoA. Positions 246, 269, and 299 each coordinate (3S)-3-hydroxy-3-methylglutaryl-CoA.

The protein belongs to the thiolase-like superfamily. Archaeal HMG-CoA synthase family. In terms of assembly, interacts with acetoacetyl-CoA thiolase that catalyzes the precedent step in the pathway and with a DUF35 protein. The acetoacetyl-CoA thiolase/HMG-CoA synthase complex channels the intermediate via a fused CoA-binding site, which allows for efficient coupling of the endergonic thiolase reaction with the exergonic HMGCS reaction.

The catalysed reaction is acetoacetyl-CoA + acetyl-CoA + H2O = (3S)-3-hydroxy-3-methylglutaryl-CoA + CoA + H(+). Its pathway is metabolic intermediate biosynthesis; (R)-mevalonate biosynthesis; (R)-mevalonate from acetyl-CoA: step 2/3. In terms of biological role, catalyzes the condensation of acetyl-CoA with acetoacetyl-CoA to form 3-hydroxy-3-methylglutaryl-CoA (HMG-CoA). Functions in the mevalonate (MVA) pathway leading to isopentenyl diphosphate (IPP), a key precursor for the biosynthesis of isoprenoid compounds that are building blocks of archaeal membrane lipids. The sequence is that of Hydroxymethylglutaryl-CoA synthase from Methanosarcina barkeri (strain Fusaro / DSM 804).